Reading from the N-terminus, the 769-residue chain is Polymeric immunoglobulin receptor (769 aa).

The signal sequence occupies residues 1–18; that stretch reads MRLSLFALLVTVFSGVST. At 19-643 the chain is on the extracellular side; the sequence is QSPIFGPQDV…SAGGQSGSSK (625 aa). The 106-residue stretch at 21-126 folds into the Ig-like V-type 1; required for binding to polymeric IgA and IgM domain; that stretch reads PIFGPQDVSS…RGLFFDVSLE (106 aa). An intrachain disulfide couples Cys-40 to Cys-110. Asn-90, Asn-135, and Asn-206 each carry an N-linked (GlcNAc...) asparagine glycan. Ig-like V-type domains are found at residues 135–237, 240–341, 353–457, and 463–563; these read NDTH…DLQV, PEPE…VQAW, NSRS…LQVA, and PDLE…IYVA. 3 disulfide bridges follow: Cys-152-Cys-220, Cys-257-Cys-324, and Cys-370-Cys-440. An N-linked (GlcNAc...) asparagine glycan is attached at Asn-471. Cys-484 and Cys-546 are oxidised to a cystine. Disordered stretches follow at residues 569–604 and 619–640; these read RGSPHINPTDANARAKDAPEEEAMESSVREDENKAN and AGDQAQENRASGNAGSAGGQSG. Over residues 595-604 the composition is skewed to basic and acidic residues; the sequence is SVREDENKAN. The helical transmembrane segment at 644-666 threads the bilayer; the sequence is VLFSTLVPLGLVLAVGAVAVWVA. Residues 667–769 lie on the Cytoplasmic side of the membrane; sequence RVRHRKNVDR…AQVHDGPQEA (103 aa). Ser-678, Ser-687, Ser-694, and Ser-740 each carry phosphoserine. Residues 719 to 741 are disordered; it reads EIETTTECTTEPEESKKAKRSSK. A compositionally biased stretch (basic and acidic residues) spans 731-741; that stretch reads EESKKAKRSSK.

In terms of assembly, interacts (mainly via CDR1-like domain) with dimeric IgA. Interacts (mainly via CDR2-like domain) with pentameric IgM. Either free or part of the secretory IgA (sIgA) complex that consists of two, four or five IgA monomers, and two additional non-Ig polypeptides, namely the JCHAIN and the secretory component (the proteolytic product of PIGR). Free secretory component interacts with bacterial antigens toxA of C.difficile and eae of E.coli. In terms of processing, N-glycosylated. N-glycosylation is required for anchoring IgA molecules to mucus, but is not necessary for Ig binding.

The protein localises to the cell membrane. It is found in the secreted. In terms of biological role, mediates selective transcytosis of polymeric IgA and IgM across mucosal epithelial cells. Binds polymeric IgA and IgM at the basolateral surface of epithelial cells. The complex is then transported across the cell to be secreted at the apical surface. During this process, a cleavage occurs that separates the extracellular (known as the secretory component) from the transmembrane segment. Functionally, through its N-linked glycans ensures anchoring of secretory IgA (sIgA) molecules to mucus lining the epithelial surface to neutralize extracellular pathogens. On its own (free form) may act as a non-specific microbial scavenger to prevent pathogen interaction with epithelial cells. This Rattus norvegicus (Rat) protein is Polymeric immunoglobulin receptor (Pigr).